The chain runs to 157 residues: Probable Brix domain-containing ribosomal biogenesis protein (157 aa).

The region spanning 1 to 157 (MLVTSSRKPS…KLNLRGFKKY (157 aa)) is the Brix domain.

In terms of biological role, probably involved in the biogenesis of the ribosome. This chain is Probable Brix domain-containing ribosomal biogenesis protein, found in Methanosarcina barkeri (strain Fusaro / DSM 804).